Here is a 281-residue protein sequence, read N- to C-terminus: Translation initiation factor IF3-4, chloroplastic (281 aa).

The N-terminal 51 residues, 1–51 (MAGITSTVGFNAILAGATKTVSHPVKSKLFGLRLCVPEFSIVSLSPYHHRR), are a transit peptide targeting the chloroplast. 2 disordered regions span residues 63 to 86 (GGGG…DDSL) and 253 to 281 (KVQE…TQDI). Composition is skewed to basic and acidic residues over residues 70 to 79 (PGDRRGRQKE) and 253 to 270 (KVQE…DDKV).

The protein belongs to the IF-3 family. In terms of assembly, monomer.

Its subcellular location is the plastid. It localises to the chloroplast. Chloroplast translation initiation factor that is essential for the coordination of leaf and chloroplast development. IF-3 binds to the 30S ribosomal subunit and shifts the equilibrium between 70S ribosomes and their 50S and 30S subunits in favor of the free subunits, thus enhancing the availability of 30S subunits on which protein synthesis initiation begins. The polypeptide is Translation initiation factor IF3-4, chloroplastic (Arabidopsis thaliana (Mouse-ear cress)).